Reading from the N-terminus, the 414-residue chain is tRNA N6-adenosine threonylcarbamoyltransferase, mitochondrial (414 aa).

The N-terminal 29 residues, 1–29, are a transit peptide targeting the mitochondrion; the sequence is MLMLRRTAGAIPKPPKSKVYGFLRRFSVH. Lys74 and Lys140 each carry N6-acetyllysine. The a divalent metal cation site is built by His147 and His151. Residues 169 to 173 and Asp202 each bind substrate; that span reads LISGG. The residue at position 203 (Lys203) is an N6-acetyllysine. The substrate site is built by Gly222 and Glu226. 2 positions are modified to N6-acetyllysine: Lys230 and Lys299. Substrate-binding positions include 329–330 and Thr357; that span reads SN. Asp358 serves as a coordination point for a divalent metal cation.

Belongs to the KAE1 / TsaD family. As to quaternary structure, monomer. Requires a divalent metal cation as cofactor.

The protein localises to the mitochondrion. It carries out the reaction L-threonylcarbamoyladenylate + adenosine(37) in tRNA = N(6)-L-threonylcarbamoyladenosine(37) in tRNA + AMP + H(+). Functionally, required for the formation of a threonylcarbamoyl group on adenosine at position 37 (t(6)A37) in mitochondrial tRNAs that read codons beginning with adenine. Probably involved in the transfer of the threonylcarbamoyl moiety of threonylcarbamoyl-AMP (TC-AMP) to the N6 group of A37. Involved in mitochondrial genome maintenance. This Mus musculus (Mouse) protein is tRNA N6-adenosine threonylcarbamoyltransferase, mitochondrial.